The following is a 236-amino-acid chain: Ribosome assembly factor mrt4 (236 aa).

Belongs to the universal ribosomal protein uL10 family. In terms of assembly, associates with the pre-60S ribosomal particle.

The protein localises to the nucleus. It is found in the nucleolus. It localises to the cytoplasm. In terms of biological role, component of the ribosome assembly machinery. Nuclear paralog of the ribosomal protein P0, it binds pre-60S subunits at an early stage of assembly in the nucleolus, and is replaced by P0 in cytoplasmic pre-60S subunits and mature 80S ribosomes. In Eremothecium gossypii (strain ATCC 10895 / CBS 109.51 / FGSC 9923 / NRRL Y-1056) (Yeast), this protein is Ribosome assembly factor mrt4.